The primary structure comprises 275 residues: Large ribosomal subunit protein uL2 (275 aa).

A disordered region spans residues 223 to 275; sequence VAMNPIDHPHGGGEGRTGEAREPVSPWGTPSKGYKTRRNKRTNNMIVQRRKRK. A compositionally biased stretch (basic and acidic residues) spans 229-244; that stretch reads DHPHGGGEGRTGEARE.

The protein belongs to the universal ribosomal protein uL2 family. Part of the 50S ribosomal subunit. Forms a bridge to the 30S subunit in the 70S ribosome.

One of the primary rRNA binding proteins. Required for association of the 30S and 50S subunits to form the 70S ribosome, for tRNA binding and peptide bond formation. It has been suggested to have peptidyltransferase activity; this is somewhat controversial. Makes several contacts with the 16S rRNA in the 70S ribosome. The chain is Large ribosomal subunit protein uL2 from Bordetella avium (strain 197N).